Here is a 320-residue protein sequence, read N- to C-terminus: Ribosomal large subunit pseudouridine synthase D (320 aa).

The S4 RNA-binding domain maps to 18 to 90 (QRLDQIAAQL…IELEIVYEDE (73 aa)). Aspartate 138 is an active-site residue.

This sequence belongs to the pseudouridine synthase RluA family.

The protein localises to the cytoplasm. The catalysed reaction is uridine(1911/1915/1917) in 23S rRNA = pseudouridine(1911/1915/1917) in 23S rRNA. Its function is as follows. Responsible for synthesis of pseudouridine from uracil at positions 1911, 1915 and 1917 in 23S ribosomal RNA. This is Ribosomal large subunit pseudouridine synthase D (rluD) from Pseudomonas aeruginosa (strain ATCC 15692 / DSM 22644 / CIP 104116 / JCM 14847 / LMG 12228 / 1C / PRS 101 / PAO1).